Consider the following 54-residue polypeptide: Rubredoxin (54 aa).

The Rubredoxin-like domain maps to 1–54 (MKKYQCIVCGWIYDEAEGWPQDGIAPGTKWEDIPDDWTCPDCGVSKVDFEMIEV). Residues C6, C9, C39, and C42 each coordinate Fe cation.

This sequence belongs to the rubredoxin family. Fe(3+) is required as a cofactor.

It localises to the cytoplasm. Its pathway is hydrocarbon metabolism; alkane degradation. In terms of biological role, involved in the hydrocarbon hydroxylating system, which transfers electrons from NADH to rubredoxin reductase and then through rubredoxin to alkane 1 monooxygenase. The sequence is that of Rubredoxin (rubA) from Acinetobacter baylyi (strain ATCC 33305 / BD413 / ADP1).